We begin with the raw amino-acid sequence, 162 residues long: 2-C-methyl-D-erythritol 2,4-cyclodiphosphate synthase (162 aa).

A divalent metal cation-binding residues include aspartate 12 and histidine 14. Residues 12 to 14 (DVH) and 38 to 39 (HS) each bind 4-CDP-2-C-methyl-D-erythritol 2-phosphate. Histidine 46 contributes to the a divalent metal cation binding site. Residues 60–62 (DIG), 65–69 (FPDTD), and arginine 146 contribute to the 4-CDP-2-C-methyl-D-erythritol 2-phosphate site.

This sequence belongs to the IspF family. As to quaternary structure, homotrimer. It depends on a divalent metal cation as a cofactor.

It carries out the reaction 4-CDP-2-C-methyl-D-erythritol 2-phosphate = 2-C-methyl-D-erythritol 2,4-cyclic diphosphate + CMP. Its pathway is isoprenoid biosynthesis; isopentenyl diphosphate biosynthesis via DXP pathway; isopentenyl diphosphate from 1-deoxy-D-xylulose 5-phosphate: step 4/6. Its function is as follows. Involved in the biosynthesis of isopentenyl diphosphate (IPP) and dimethylallyl diphosphate (DMAPP), two major building blocks of isoprenoid compounds. Catalyzes the conversion of 4-diphosphocytidyl-2-C-methyl-D-erythritol 2-phosphate (CDP-ME2P) to 2-C-methyl-D-erythritol 2,4-cyclodiphosphate (ME-CPP) with a corresponding release of cytidine 5-monophosphate (CMP). The chain is 2-C-methyl-D-erythritol 2,4-cyclodiphosphate synthase from Bordetella avium (strain 197N).